The primary structure comprises 470 residues: Acyltransferase BOA11 (470 aa).

Residue histidine 156 is the Proton acceptor of the active site.

The protein belongs to the plant acyltransferase family.

The protein operates within polyketide biosynthesis. Acyltransferase; part of the gene cluster B that mediates the biosynthesis of botcinic acid and its botcinin derivatives, acetate-derived polyketides that contribute to virulence when combined with the sesquiterpene botrydial. Botcinic acid and its derivatives have been shown to induce chlorosis and necrosis during host plant infection, but also have antifungal activities. Two polyketide synthases, BOA6 and BOA9, are involved in the biosynthesis of botcinins. BOA6 mediates the formation of the per-methylated tetraketide core by condensation of four units of malonyl-CoA with one unit of acetyl-CoA, which would be methylated in activated methylene groups to yield a bicyclic acid intermediate that could then either be converted to botrylactone derivatives or lose the starter acetate unit through a retro-Claisen type C-C bond cleavage to yield botcinin derivatives. The second polyketide synthase, BOA9, is probably required for the biosynthesis of the tetraketide side chain of botcinins. The methyltransferase (MT) domain within BOA6 is probably responsible for the incorporation of four methyl groups. The trans-enoyl reductase BOA5 might take over the enoyl reductase function of BOA6 that misses an ER domain. The monooxygenases BOA2, BOA3 and BOA4 might be involved in further hydroxylations at C4, C5 and C8, whereas BOA7, close to BOA9, could potentially be involved in the hydroxylation at C4 in the side chain of botcinins. This Botryotinia fuckeliana (strain B05.10) (Noble rot fungus) protein is Acyltransferase BOA11.